A 151-amino-acid chain; its full sequence is Transcriptional regulator MraZ (151 aa).

SpoVT-AbrB domains follow at residues 5 to 52 (ANAI…PLSE) and 81 to 124 (AVDL…DEDA).

It belongs to the MraZ family. In terms of assembly, forms oligomers.

It localises to the cytoplasm. The protein resides in the nucleoid. This Pseudomonas savastanoi pv. phaseolicola (strain 1448A / Race 6) (Pseudomonas syringae pv. phaseolicola (strain 1448A / Race 6)) protein is Transcriptional regulator MraZ.